We begin with the raw amino-acid sequence, 130 residues long: MSMQDPIADMLTRIRNAQQVGKTSVTMPSSKLKKSIAGVLKEEGYVGEFSVNDAAKAELTVELKYFEGKPVIAELDRVSRPGLRSYVGKDELPSVRGGLGIAIVSTSKGVMTDRAARAAGVGGEILCTVF.

It belongs to the universal ribosomal protein uS8 family. In terms of assembly, part of the 30S ribosomal subunit. Contacts proteins S5 and S12.

Its function is as follows. One of the primary rRNA binding proteins, it binds directly to 16S rRNA central domain where it helps coordinate assembly of the platform of the 30S subunit. The sequence is that of Small ribosomal subunit protein uS8 from Saccharophagus degradans (strain 2-40 / ATCC 43961 / DSM 17024).